Consider the following 193-residue polypeptide: Peptidyl-tRNA hydrolase (193 aa).

A tRNA-binding site is contributed by Tyr-15. His-20 acts as the Proton acceptor in catalysis. Positions 65, 67, and 113 each coordinate tRNA.

This sequence belongs to the PTH family. In terms of assembly, monomer.

It is found in the cytoplasm. The enzyme catalyses an N-acyl-L-alpha-aminoacyl-tRNA + H2O = an N-acyl-L-amino acid + a tRNA + H(+). In terms of biological role, hydrolyzes ribosome-free peptidyl-tRNAs (with 1 or more amino acids incorporated), which drop off the ribosome during protein synthesis, or as a result of ribosome stalling. Catalyzes the release of premature peptidyl moieties from peptidyl-tRNA molecules trapped in stalled 50S ribosomal subunits, and thus maintains levels of free tRNAs and 50S ribosomes. The polypeptide is Peptidyl-tRNA hydrolase (Ehrlichia ruminantium (strain Gardel)).